We begin with the raw amino-acid sequence, 622 residues long: Matrilin-4 (622 aa).

Residues 1-18 (MRGLLCWPVLLLLLQPWE) form the signal peptide. Residues 34-213 (DLVFVIDSSR…EFGLQFQSRL (180 aa)) enclose the VWFA 1 domain. Asparagine 69 carries N-linked (GlcNAc...) asparagine glycosylation. Residues 215–255 (GKDQCAEGGHGCQHQCVNAWAMFHCTCNPGYKLAADNKSCL) enclose the EGF-like 1; incomplete domain. 12 cysteine pairs are disulfide-bonded: cysteine 219–cysteine 230, cysteine 226–cysteine 239, cysteine 241–cysteine 254, cysteine 260–cysteine 271, cysteine 267–cysteine 280, cysteine 282–cysteine 295, cysteine 301–cysteine 312, cysteine 308–cysteine 321, cysteine 323–cysteine 336, cysteine 342–cysteine 353, cysteine 349–cysteine 362, and cysteine 364–cysteine 377. Asparagine 251 carries an N-linked (GlcNAc...) asparagine glycan. 3 consecutive EGF-like domains span residues 256 to 292 (AIDL…QQDQ), 297 to 337 (AIDY…RSCQ), and 342 to 377 (CNGV…GKSC). The N-linked (GlcNAc...) asparagine glycan is linked to asparagine 305. One can recognise a VWFA 2 domain in the interval 386 to 561 (DLVLLVDGSK…GTMTHLLENL (176 aa)). A coiled-coil region spans residues 591–622 (GRTLGALESLTLNLAQLTARLEDLENQLANQK).

In terms of assembly, interacts with COMP. Embryonic kidney, lung and placenta.

It localises to the secreted. Its function is as follows. Major component of the extracellular matrix of cartilage. The protein is Matrilin-4 (MATN4) of Homo sapiens (Human).